A 624-amino-acid chain; its full sequence is MPRIARLPDIVANKISAGEVVQRPASVVKELLENAIDAGATRITVAIKDAGKELVQVIDNGSGMDEEDALRCVERFATSKISDAEELDALTTLGFRGEALASISTVSHFELRTRRENDNVGIQLRYEGGVLSERGKAASEPGTAVSVRNLFYNVPARRKFLKSNATEFKHIFESVKAQVLAYPEIQWQMINDDETLFDFRSSDMHERLNFFFGDDFAGSLIEVHDDNDFLSLHGYVGKPSMQKRQKNEQFIYLNRRVIQNRMLSQALQQAYGELLVERHSPFVLLFLGIDPQQTDVNVHPAKLEVKFEDERSVRTMFYTIIKRSVRMQDFSPDVGGEGFHETSDSFSSRSSQHSDARLGFQAVPSRASSTDDLYREFQESTPKRPMPDRTRVSEQEEMFSHSADIFCEPDREFRSSDFGQVSEEFVDGVRLEPEEKDPKIWQLHNKYIICQIKTGLMLIDQHVAHERVLYERAVDIMDNNVPNAQQLLFPQKVELKPWEFEIYLEICDDLDRLGFNLGTLGTRTVMIEGVPQDVRSGSEAYILQDMIQEYQQNASKLKLEKRENLAKSYSCRNAIMSGQALSLEDMRSLIDRLFATKMPYVCPHGRPVIIRISLDQLDRMFGRK.

The disordered stretch occupies residues 336–357 (GEGFHETSDSFSSRSSQHSDAR). The segment covering 344 to 353 (DSFSSRSSQH) has biased composition (low complexity).

This sequence belongs to the DNA mismatch repair MutL/HexB family.

This protein is involved in the repair of mismatches in DNA. It is required for dam-dependent methyl-directed DNA mismatch repair. May act as a 'molecular matchmaker', a protein that promotes the formation of a stable complex between two or more DNA-binding proteins in an ATP-dependent manner without itself being part of a final effector complex. The sequence is that of DNA mismatch repair protein MutL from Chlorobium phaeobacteroides (strain BS1).